We begin with the raw amino-acid sequence, 146 residues long: Anti-sigma F factor (146 aa).

The protein belongs to the anti-sigma-factor family.

The catalysed reaction is L-seryl-[protein] + ATP = O-phospho-L-seryl-[protein] + ADP + H(+). The enzyme catalyses L-threonyl-[protein] + ATP = O-phospho-L-threonyl-[protein] + ADP + H(+). Its function is as follows. Binds to sigma F and blocks its ability to form an RNA polymerase holoenzyme (E-sigma F). Phosphorylates SpoIIAA on a serine residue. This phosphorylation may enable SpoIIAA to act as an anti-anti-sigma factor that counteracts SpoIIAB and thus releases sigma F from inhibition. This Shouchella clausii (strain KSM-K16) (Alkalihalobacillus clausii) protein is Anti-sigma F factor.